A 589-amino-acid polypeptide reads, in one-letter code: ATP-dependent lipid A-core flippase (589 aa).

The next 5 membrane-spanning stretches (helical) occupy residues 29 to 49 (LLLVAALIAALIEAAGTTGFL), 70 to 90 (WLPVQIILLFVVRGIAGYITD), 157 to 177 (VIGALALMLWHSWQVTLTILV), 261 to 281 (MIGAIGLSALLFVAGAQALAG), and 283 to 303 (LTAGDFVVLMTSMLTIIPGLK). The ABC transmembrane type-1 domain maps to 32-314 (VAALIAALIE…LTNVQNMVQR (283 aa)). One can recognise an ABC transporter domain in the interval 346–582 (IEFRDVTARY…GGLYSHLHGM (237 aa)). 380-387 (GRSGSGKS) lines the ATP pocket.

The protein belongs to the ABC transporter superfamily. Lipid exporter (TC 3.A.1.106) family. As to quaternary structure, homodimer.

Its subcellular location is the cell inner membrane. The enzyme catalyses ATP + H2O + lipid A-core oligosaccharideSide 1 = ADP + phosphate + lipid A-core oligosaccharideSide 2.. In terms of biological role, involved in lipopolysaccharide (LPS) biosynthesis. Translocates lipid A-core from the inner to the outer leaflet of the inner membrane. Transmembrane domains (TMD) form a pore in the inner membrane and the ATP-binding domain (NBD) is responsible for energy generation. This chain is ATP-dependent lipid A-core flippase, found in Xanthomonas oryzae pv. oryzae (strain MAFF 311018).